A 281-amino-acid chain; its full sequence is MDYKDNSLKTLKLGQKTDYIANYDRTLLQPVPRALNRDGLGITKQQPFSVGADIWTAYEISWLNIKGLPQVAIADVEIDYRSTNLIESKSFKLYLNSFNQTKFSDMSEVQRTISEDLSICAEGNVRVQLHSLSNYSHERIADFAGECLDELDIEISDYGFNAEILQNCTALSTEIVEETLVSHLLKSNCLITSQPDWGSVQIHYQGKRIDHEKLLRYLVSFRQHNEFHEQCVERIYCDIMKYARPEKLTVYARYTRRGGLDINPFRSNFEAIPQNLRLARQ.

86-88 (IES) serves as a coordination point for substrate. 88–89 (SK) contacts NADPH. Catalysis depends on cysteine 189, which acts as the Thioimide intermediate. Residue aspartate 196 is the Proton donor of the active site. 228–229 (HE) serves as a coordination point for substrate. 257 to 258 (RG) contributes to the NADPH binding site.

It belongs to the GTP cyclohydrolase I family. QueF type 2 subfamily. As to quaternary structure, homodimer.

Its subcellular location is the cytoplasm. It carries out the reaction 7-aminomethyl-7-carbaguanine + 2 NADP(+) = 7-cyano-7-deazaguanine + 2 NADPH + 3 H(+). The protein operates within tRNA modification; tRNA-queuosine biosynthesis. Functionally, catalyzes the NADPH-dependent reduction of 7-cyano-7-deazaguanine (preQ0) to 7-aminomethyl-7-deazaguanine (preQ1). The sequence is that of NADPH-dependent 7-cyano-7-deazaguanine reductase from Mannheimia succiniciproducens (strain KCTC 0769BP / MBEL55E).